Consider the following 292-residue polypeptide: uncharacterized protein (292 aa).

The HTH lysR-type domain maps to 1–59 (MTITQLKVFVKIAETGSFTKAGQALNMTQPAVSHAISAIEAELDVKLIIRDRRNGLMLT). Residues 18–37 (FTKAGQALNMTQPAVSHAIS) constitute a DNA-binding region (H-T-H motif).

Belongs to the LysR transcriptional regulatory family.

This is an uncharacterized protein from Bacillus subtilis (strain 168).